We begin with the raw amino-acid sequence, 494 residues long: Sulfate adenylyltransferase subunit 1 (494 aa).

Positions 28–242 (TRPLRLITCG…TLELATVRST (215 aa)) constitute a tr-type G domain. The interval 37 to 44 (GSVDDGKS) is G1. 37–44 (GSVDDGKS) provides a ligand contact to GTP. A G2 region spans residues 94–98 (GITID). The segment at 115-118 (DTPG) is G3. GTP contacts are provided by residues 115–119 (DTPGH) and 170–173 (NKID). The tract at residues 170–173 (NKID) is G4. The interval 207–209 (SAL) is G5.

Belongs to the TRAFAC class translation factor GTPase superfamily. Classic translation factor GTPase family. CysN/NodQ subfamily. Heterodimer composed of CysD, the smaller subunit, and CysN.

It carries out the reaction sulfate + ATP + H(+) = adenosine 5'-phosphosulfate + diphosphate. It participates in sulfur metabolism; hydrogen sulfide biosynthesis; sulfite from sulfate: step 1/3. Functionally, with CysD forms the ATP sulfurylase (ATPS) that catalyzes the adenylation of sulfate producing adenosine 5'-phosphosulfate (APS) and diphosphate, the first enzymatic step in sulfur assimilation pathway. APS synthesis involves the formation of a high-energy phosphoric-sulfuric acid anhydride bond driven by GTP hydrolysis by CysN coupled to ATP hydrolysis by CysD. This is Sulfate adenylyltransferase subunit 1 from Agrobacterium fabrum (strain C58 / ATCC 33970) (Agrobacterium tumefaciens (strain C58)).